We begin with the raw amino-acid sequence, 151 residues long: MKVILRKDVATLGDAGDVVIVKNGYANNYLIPQSIAIRATEGTLKALETERKQQARKVEMQRKHAREQAQKIEQLALKVFARAGESGKLFGTVTSADIAEALKAQGFEIDRRKITIEAPIKALGKFEAAVKLFSDVTVAVQFEVEAEGMEA.

The protein belongs to the bacterial ribosomal protein bL9 family.

Binds to the 23S rRNA. This is Large ribosomal subunit protein bL9 from Chlorobium chlorochromatii (strain CaD3).